Consider the following 883-residue polypeptide: AP-5 complex subunit beta-1 (883 aa).

In terms of assembly, probably part of the adaptor protein complex 5 (AP-5).

Functionally, as part of AP-5, a probable fifth adaptor protein complex, it may be involved in endosomal transport. This is AP-5 complex subunit beta-1 (ap5b1) from Xenopus tropicalis (Western clawed frog).